Consider the following 216-residue polypeptide: Redox-sensing transcriptional repressor Rex 1 (216 aa).

The segment at residues 16–55 is a DNA-binding region (H-T-H motif); it reads LYYRYLRMLHDTGKNKVSSTELSEAVQVDSATIRRDFSYF. 90 to 95 contributes to the NAD(+) binding site; that stretch reads GVGNLG.

It belongs to the transcriptional regulatory Rex family. As to quaternary structure, homodimer.

It localises to the cytoplasm. Functionally, modulates transcription in response to changes in cellular NADH/NAD(+) redox state. This is Redox-sensing transcriptional repressor Rex 1 from Enterococcus faecalis (strain ATCC 700802 / V583).